A 218-amino-acid polypeptide reads, in one-letter code: Holliday junction branch migration complex subunit RuvA (218 aa).

The interval 1–64 (MIGKITGRLE…EDVMQLFGFT (64 aa)) is domain I. Residues 65 to 143 (TLTEKEWHRL…SVMGMSDTQA (79 aa)) form a domain II region. Residues 144-164 (TVAAQSSDAVIETRAAPSPVV) are flexible linker. Positions 165–218 (QNPSAQAEALSALSNLGYAPGDAAAAVAQAAGELPDAETPDLIRAALKRLAPKG) are domain III.

This sequence belongs to the RuvA family. In terms of assembly, homotetramer. Forms an RuvA(8)-RuvB(12)-Holliday junction (HJ) complex. HJ DNA is sandwiched between 2 RuvA tetramers; dsDNA enters through RuvA and exits via RuvB. An RuvB hexamer assembles on each DNA strand where it exits the tetramer. Each RuvB hexamer is contacted by two RuvA subunits (via domain III) on 2 adjacent RuvB subunits; this complex drives branch migration. In the full resolvosome a probable DNA-RuvA(4)-RuvB(12)-RuvC(2) complex forms which resolves the HJ.

Its subcellular location is the cytoplasm. Functionally, the RuvA-RuvB-RuvC complex processes Holliday junction (HJ) DNA during genetic recombination and DNA repair, while the RuvA-RuvB complex plays an important role in the rescue of blocked DNA replication forks via replication fork reversal (RFR). RuvA specifically binds to HJ cruciform DNA, conferring on it an open structure. The RuvB hexamer acts as an ATP-dependent pump, pulling dsDNA into and through the RuvAB complex. HJ branch migration allows RuvC to scan DNA until it finds its consensus sequence, where it cleaves and resolves the cruciform DNA. The chain is Holliday junction branch migration complex subunit RuvA from Roseobacter denitrificans (strain ATCC 33942 / OCh 114) (Erythrobacter sp. (strain OCh 114)).